The chain runs to 392 residues: 8-amino-7-oxononanoate synthase (392 aa).

Arg-19 is a binding site for substrate. Gly-106 to Tyr-107 contacts pyridoxal 5'-phosphate. Residue His-131 coordinates substrate. Residues Ser-176, His-204, and Thr-233 each coordinate pyridoxal 5'-phosphate. The residue at position 236 (Lys-236) is an N6-(pyridoxal phosphate)lysine. Substrate is bound at residue Thr-350.

The protein belongs to the class-II pyridoxal-phosphate-dependent aminotransferase family. BioF subfamily. In terms of assembly, homodimer. Pyridoxal 5'-phosphate serves as cofactor.

It catalyses the reaction 6-carboxyhexanoyl-[ACP] + L-alanine + H(+) = (8S)-8-amino-7-oxononanoate + holo-[ACP] + CO2. Its pathway is cofactor biosynthesis; biotin biosynthesis. Catalyzes the decarboxylative condensation of pimeloyl-[acyl-carrier protein] and L-alanine to produce 8-amino-7-oxononanoate (AON), [acyl-carrier protein], and carbon dioxide. This chain is 8-amino-7-oxononanoate synthase, found in Pseudomonas fluorescens (strain ATCC BAA-477 / NRRL B-23932 / Pf-5).